We begin with the raw amino-acid sequence, 318 residues long: Ankyrin repeat and SOCS box protein 7 (318 aa).

7 ANK repeats span residues 13-42, 46-75, 80-109, 116-145, 149-178, 180-208, and 213-242; these read QEEL…SPNG, NGWT…DPTV, GGFT…RSDI, DGWT…EVDP, KGTT…NIDI, NGFL…DTNL, and DGQT…DTNT. The SOCS box domain maps to 265–318; it reads LDFLQDVTRQPRTLQDLCRIKIRQCIGLQNLKLLDELPIAKVMKDYLKHKFDDI.

The protein belongs to the ankyrin SOCS box (ASB) family. As to quaternary structure, interacts with CUL5. Interacts with RNF7. Interacts with PSRC1.

The protein resides in the nucleus. It is found in the cytoplasm. It participates in protein modification; protein ubiquitination. Functionally, probable substrate-recognition component of a SCF-like ECS (Elongin-Cullin-SOCS-box protein) E3 ubiquitin-protein ligase complex which mediates the ubiquitination and subsequent proteasomal degradation of target proteins. Plays a role in spindle dynamics and genome integrity by targeting the mitotic progression protein PSRC1 for proteasomal degradation in a cell cycle-dependent manner. Also participates in meiosis by mediating the proper attachment between kinetochores and microtubules. The sequence is that of Ankyrin repeat and SOCS box protein 7 (Asb7) from Mus musculus (Mouse).